A 288-amino-acid polypeptide reads, in one-letter code: Nucleotide-binding protein Tola_2941 (288 aa).

8–15 (GRSGSGKT) is an ATP binding site. Residue 56-59 (DVRN) participates in GTP binding.

Belongs to the RapZ-like family.

Functionally, displays ATPase and GTPase activities. The sequence is that of Nucleotide-binding protein Tola_2941 from Tolumonas auensis (strain DSM 9187 / NBRC 110442 / TA 4).